A 125-amino-acid chain; its full sequence is Small ribosomal subunit protein uS12c (125 aa).

This sequence belongs to the universal ribosomal protein uS12 family. As to quaternary structure, part of the 30S ribosomal subunit.

It localises to the plastid. Its subcellular location is the chloroplast. With S4 and S5 plays an important role in translational accuracy. Located at the interface of the 30S and 50S subunits. In Oltmannsiellopsis viridis (Marine flagellate), this protein is Small ribosomal subunit protein uS12c (rps12).